A 90-amino-acid polypeptide reads, in one-letter code: Acylphosphatase (90 aa).

An Acylphosphatase-like domain is found at 4–90 (TVHLRITGHV…KGQYKDFRIY (87 aa)). Residues Arg-19 and Asn-37 contribute to the active site.

The protein belongs to the acylphosphatase family.

The catalysed reaction is an acyl phosphate + H2O = a carboxylate + phosphate + H(+). The chain is Acylphosphatase (acyP) from Caldanaerobacter subterraneus subsp. tengcongensis (strain DSM 15242 / JCM 11007 / NBRC 100824 / MB4) (Thermoanaerobacter tengcongensis).